The primary structure comprises 188 residues: tRNA(Phe) 7-((3-amino-3-carboxypropyl)-4-demethylwyosine(37)-N(4))-methyltransferase (188 aa).

The protein belongs to the TYW3 family.

The catalysed reaction is 4-demethyl-7-[(3S)-3-amino-3-carboxypropyl]wyosine(37) in tRNA(Phe) + S-adenosyl-L-methionine = 7-[(3S)-3-amino-3-carboxypropyl]wyosine(37) in tRNA(Phe) + S-adenosyl-L-homocysteine + H(+). Functionally, S-adenosyl-L-methionine-dependent methyltransferase that acts as a component of the wyosine derivatives biosynthesis pathway. Probably methylates N-4 position of wybutosine-86 to produce wybutosine-72. The polypeptide is tRNA(Phe) 7-((3-amino-3-carboxypropyl)-4-demethylwyosine(37)-N(4))-methyltransferase (Aeropyrum pernix (strain ATCC 700893 / DSM 11879 / JCM 9820 / NBRC 100138 / K1)).